The primary structure comprises 99 residues: Probable non-specific lipid-transfer protein AKCS9 (99 aa).

A signal peptide spans 1–33 (MTMKMKMKMSVVCAVVVVALFLIDVGPVAEAVT). 4 disulfides stabilise this stretch: C34/C68, C42/C56, C57/C92, and C66/C99.

The protein belongs to the plant LTP family. Expressed in most tissues except nodules.

Its function is as follows. Potential lipid transfer protein. The chain is Probable non-specific lipid-transfer protein AKCS9 from Vigna unguiculata (Cowpea).